The primary structure comprises 299 residues: Spermatocyte protein spe-11 (299 aa).

Residues 1-38 (MSDEEIDISTALNNKTTPKKKSLKRNSNSQEGYESPEE) form a disordered region.

As to expression, expressed in mature sperm.

The protein resides in the cytoplasm. Its subcellular location is the perinuclear region. Its function is as follows. Paternally sperm-supplied factor required for embryogenesis. Plays a role in preventing polyspermy possibly by promoting the formation of a continuous and cohesive eggshell chitin layer. In Caenorhabditis elegans, this protein is Spermatocyte protein spe-11 (spe-11).